Consider the following 224-residue polypeptide: Ras-related protein Rab-11C (224 aa).

A GTP-binding site is contributed by 17–24 (GDSAVGKS). Residues 39 to 47 (TKATIGVDF) carry the Effector region motif. GTP is bound by residues 65–69 (DTAGQ) and 123–126 (NKSD). A disordered region spans residues 194-224 (QGKKLTPLSDPAPQLTANTTSTHQEKKSGCC). Residues cysteine 223 and cysteine 224 are each lipidated (S-geranylgeranyl cysteine).

This sequence belongs to the small GTPase superfamily. Rab family.

The protein localises to the membrane. This is Ras-related protein Rab-11C (rab11C) from Dictyostelium discoideum (Social amoeba).